Reading from the N-terminus, the 298-residue chain is Lipoyl synthase (298 aa).

[4Fe-4S] cluster is bound by residues C40, C45, C51, C67, C71, C74, and S280. The Radical SAM core domain occupies 53–269 (AVRRTATFMI…KEIAMAKGFS (217 aa)).

Belongs to the radical SAM superfamily. Lipoyl synthase family. [4Fe-4S] cluster is required as a cofactor.

The protein resides in the cytoplasm. The enzyme catalyses [[Fe-S] cluster scaffold protein carrying a second [4Fe-4S](2+) cluster] + N(6)-octanoyl-L-lysyl-[protein] + 2 oxidized [2Fe-2S]-[ferredoxin] + 2 S-adenosyl-L-methionine + 4 H(+) = [[Fe-S] cluster scaffold protein] + N(6)-[(R)-dihydrolipoyl]-L-lysyl-[protein] + 4 Fe(3+) + 2 hydrogen sulfide + 2 5'-deoxyadenosine + 2 L-methionine + 2 reduced [2Fe-2S]-[ferredoxin]. Its pathway is protein modification; protein lipoylation via endogenous pathway; protein N(6)-(lipoyl)lysine from octanoyl-[acyl-carrier-protein]. Catalyzes the radical-mediated insertion of two sulfur atoms into the C-6 and C-8 positions of the octanoyl moiety bound to the lipoyl domains of lipoate-dependent enzymes, thereby converting the octanoylated domains into lipoylated derivatives. The polypeptide is Lipoyl synthase (Bacillus pumilus (strain SAFR-032)).